Consider the following 2442-residue polypeptide: METRSPGLNNMKPQSLQLVLEEQVLALQQQMAENQAASWRKLKNSQEAQQRQATLVRKLQAKVLQYRSWCQELEKRLEATGGPIPQRWENVEEPNLDELLVRLEEEQQRCESLAEVNTQLRLHMEKADVVNKALREDVEKLTVDWSRARDELMRKESQWQMEQEFFKGYLKGEHGRLLSLWREVVTFRRHFLEMKSATDRDLMELKAEHVRLSGSLLTCCLRLTVGAQSREPNGSGRMDGREPAQLLLLLAKTQELEKEAHERSQELIQLKSQGDLEKAELQDRVTELSALLTQSQKQNEDYEKMIKALRETVEILETNHTELMEHEASLSRNAQEEKLSLQQVIKDITQVMVEEGDNIAQGSGHENSLELDSSIFSQFDYQDADKALTLVRSVLTRRRQAVQDLRQQLAGCQEAVNLLQQQHDQWEEEGKALRQRLQKLTGERDTLAGQTVDLQGEVDSLSKERELLQKAREELRQQLEVLEQEAWRLRRVNVELQLQGDSAQGQKEEQQEELHLAVRERERLQEMLMGLEAKQSESLSELITLREALESSHLEGELLRQEQTEVTAALARAEQSIAELSSSENTLKTEVADLRAAAVKLSALNEALALDKVGLNQQLLQLEEENQSVCSRMEAAEQARNALQVDLAEAEKRREALWEKNTHLEAQLQKAEEAGAELQADLRDIQEEKEEIQKKLSESRHQQEAATTQLEQLHQEAKRQEEVLARAVQEKEALVREKAALEVRLQAVERDRQDLAEQLQGLSSAKELLESSLFEAQQQNSVIEVTKGQLEVQIQTVTQAKEVIQGEVRCLKLELDTERSQAEQERDAAARQLAQAEQEGKTALEQQKAAHEKEVNQLREKWEKERSWHQQELAKALESLEREKMELEMRLKEQQTEMEAIQAQREEERTQAESALCQMQLETEKERVSLLETLLQTQKELADASQQLERLRQDMKVQKLKEQETTGILQTQLQEAQRELKEAARQHRDDLAALQEESSSLLQDKMDLQKQVEDLKSQLVAQDDSQRLVEQEVQEKLRETQEYNRIQKELEREKASLTLSLMEKEQRLLVLQEADSIRQQELSALRQDMQEAQGEQKELSAQMELLRQEVKEKEADFLAQEAQLLEELEASHITEQQLRASLWAQEAKAAQLQLRLRSTESQLEALAAEQQPGNQAQAQAQLASLYSALQQALGSVCESRPELSGGGDSAPSVWGLEPDQNGARSLFKRGPLLTALSAEAVASALHKLHQDLWKTQQTRDVLRDQVQKLEERLTDTEAEKSQVHTELQDLQRQLSQNQEEKSKWEGKQNSLESELMELHETMASLQSRLRRAELQRMEAQGERELLQAAKENLTAQVEHLQAAVVEARAQASAAGILEEDLRTARSALKLKNEEVESERERAQALQEQGELKVAQGKALQENLALLTQTLAEREEEVETLRGQIQELEKQREMQKAALELLSLDLKKRNQEVDLQQEQIQELEKCRSVLEHLPMAVQEREQKLTVQREQIRELEKDRETQRNVLEHQLLELEKKDQMIESQRGQVQDLKKQLVTLECLALELEENHHKMECQQKLIKELEGQRETQRVALTHLTLDLEERSQELQAQSSQIHDLESHSTVLARELQERDQEVKSQREQIEELQRQKEHLTQDLERRDQELMLQKERIQVLEDQRTRQTKILEEDLEQIKLSLRERGRELTTQRQLMQERAEEGKGPSKAQRGSLEHMKLILRDKEKEVECQQEHIHELQELKDQLEQQLQGLHRKVGETSLLLSQREQEIVVLQQQLQEAREQGELKEQSLQSQLDEAQRALAQRDQELEALQQEQQQAQGQEERVKEKADALQGALEQAHMTLKERHGELQDHKEQARRLEEELAVEGRRVQALEEVLGDLRAESREQEKALLALQQQCAEQAQEHEVETRALQDSWLQAQAVLKERDQELEALRAESQSSRHQEEAARARAEALQEALGKAHAALQGKEQHLLEQAELSRSLEASTATLQASLDACQAHSRQLEEALRIQEGEIQDQDLRYQEDVQQLQQALAQRDEELRHQQEREQLLEKSLAQRVQENMIQEKQNLGQEREEEEIRGLHQSVRELQLTLAQKEQEILELRETQQRNNLEALPHSHKTSPMEEQSLKLDSLEPRLQRELERLQAALRQTEAREIEWREKAQDLALSLAQTKASVSSLQEVAMFLQASVLERDSEQQRLQDELELTRRALEKERLHSPGATSTAELGSRGEQGVQLGEVSGVEAEPSPDGMEKQSWRQRLEHLQQAVARLEIDRSRLQRHNVQLRSTLEQVERERRKLKREAMRAAQAGSLEISKATASSPTQQDGRGQKNSDAKCVAELQKEVVLLQAQLTLERKQKQDYITRSAQTSRELAGLHHSLSHSLLAVAQAPEATVLEAETRRLDESLTQSLTSPGPVLLHPSPSTTQAASR.

Coiled-coil stretches lie at residues 95–158 (NLDE…KESQ), 244–352 (AQLL…TQVM), 395–1172 (LTRR…EQQP), and 1243–2227 (SALH…KERL). Basic and acidic residues-rich tracts occupy residues 1273–1289 (LTDT…ELQD) and 1699–1715 (LTTQ…EGKG). Disordered regions lie at residues 1273 to 1308 (LTDT…EGKQ), 1699 to 1725 (LTTQ…GSLE), and 1820 to 1839 (EALQ…VKEK). Positions 1820–1831 (EALQQEQQQAQG) are enriched in low complexity. Serine 2138 carries the phosphoserine modification. Threonine 2218 bears the Phosphothreonine mark. Positions 2223 to 2244 (EKERLHSPGATSTAELGSRGEQ) are disordered. Serine 2229, serine 2252, and serine 2322 each carry phosphoserine. The stretch at 2262–2376 (GMEKQSWRQR…RKQKQDYITR (115 aa)) forms a coiled coil. 2 disordered regions span residues 2307-2345 (RRKL…KNSD) and 2416-2442 (ESLT…AASR). Residues 2328-2338 (ATASSPTQQDG) are compositionally biased toward polar residues. Phosphoserine; by NEK2 occurs at positions 2417 and 2421. Polar residues predominate over residues 2433 to 2442 (SPSTTQAASR).

Monomer and homodimer. Forms a complex in vitro with both NEK2 kinase and the PPP1CC catalytic subunit of protein phosphatase 1 (PP1). Interacts with CEP135. Interacts with CROCC/rootletin. Interacts with CNTLN. Interacts with NIN (via C-terminus). Interacts with CCDC102B (via N-terminus); the interaction results in recruitment of CCDC102B to the proximal ends of centrioles. In terms of processing, differentially phosphorylated during cell cycle. Phosphorylation may regulate association/dissociation from centrosome. During M phase of mitosis, C-terminal part is phosphorylated by NEK2, suggesting that it may trigger the dissociation from the mitotic centrosome. Dephosphorylated in vitro by the PP1 phosphatase. Ubiquitously and weakly expressed.

The protein localises to the cytoplasm. It localises to the perinuclear region. Its subcellular location is the cytoskeleton. It is found in the microtubule organizing center. The protein resides in the centrosome. The protein localises to the centriole. It localises to the cilium basal body. Its subcellular location is the cell projection. It is found in the cilium. The protein resides in the photoreceptor outer segment. The protein localises to the photoreceptor inner segment. Its function is as follows. Plays an important role in centrosome cohesion during interphase. Recruits CCDC102B to the proximal ends of centrioles. Maintains centrosome cohesion by forming intercentriolar linkages. Accumulates at the proximal end of each centriole, forming supramolecular assemblies with viscous material properties that promote organelle cohesion. May be involved in ciliogenesis. The polypeptide is Centrosome-associated protein CEP250 (CEP250) (Homo sapiens (Human)).